The sequence spans 127 residues: Fluoride-specific ion channel FluC (127 aa).

Transmembrane regions (helical) follow at residues 4 to 24 (LLLA…LLSM), 35 to 55 (LGTL…FAWF), 71 to 91 (TGFC…VFLL), and 103 to 123 (VFVN…LFSA). Glycine 75 and threonine 78 together coordinate Na(+).

The protein belongs to the fluoride channel Fluc/FEX (TC 1.A.43) family.

Its subcellular location is the cell inner membrane. It carries out the reaction fluoride(in) = fluoride(out). Its activity is regulated as follows. Na(+) is not transported, but it plays an essential structural role and its presence is essential for fluoride channel function. Its function is as follows. Fluoride-specific ion channel. Important for reducing fluoride concentration in the cell, thus reducing its toxicity. The polypeptide is Fluoride-specific ion channel FluC (Escherichia coli (strain ATCC 8739 / DSM 1576 / NBRC 3972 / NCIMB 8545 / WDCM 00012 / Crooks)).